Here is a 689-residue protein sequence, read N- to C-terminus: Quinidine resistance protein 3 (689 aa).

Residues 1–24 (MQAQGSQSNVGSLRSNCSDNSLPN) show a composition bias toward polar residues. The interval 1-73 (MQAQGSQSNV…DNQLSRLKSE (73 aa)) is disordered. The Extracellular segment spans residues 1–108 (MQAQGSQSNV…RDYPPMMKKM (108 aa)). 2 stretches are compositionally biased toward basic and acidic residues: residues 29–51 (MHCDESSGSPHSEHNDYSYEKTN) and 59–73 (SREHRDNQLSRLKSE). The helical transmembrane segment at 109–131 (IVFLIAFSSMMGPMGTSIIFPAI) threads the bilayer. At 132–139 (NSITTEFK) the chain is on the cytoplasmic side. Residues 140 to 163 (TSVIMVNVSIGVYLLSLGVFPLWW) form a helical membrane-spanning segment. The Extracellular segment spans residues 164 to 175 (SSLSELEGRRTT). A helical membrane pass occupies residues 176 to 193 (YITSFALLFAFNIGSALA). Residues 194–235 (PDINSFIALRMLCGAASASVQSVGAGTVADLYISEDRGKNLS) are Cytoplasmic-facing. Residues 236–256 (YYYLGPLLAPLLSPIFGSLLV) traverse the membrane as a helical segment. The Extracellular segment spans residues 257–265 (NRWPWRSTQ). Residues 266–283 (WFMVILSGCNVILLTVLL) traverse the membrane as a helical segment. Residues 284–475 (PETLRKQDSK…KSLHFLEYPP (192 aa)) lie on the Cytoplasmic side of the membrane. Phosphoserine is present on Ser-436. A helical membrane pass occupies residues 476 to 493 (VALAITFSAISFSTVYFV). The Extracellular segment spans residues 494–510 (NMTVEYKYSRPPYNFKP). Residues 511–532 (LYIGLLYIPNSVTYFFASIYGG) form a helical membrane-spanning segment. Residues 533-558 (RWVDMLLKRYKEKYGILAPEARISWN) are Cytoplasmic-facing. Residues 559 to 577 (VVTSVISFPIALLIFGWCL) traverse the membrane as a helical segment. Residues 578 to 586 (DKKCHWVTP) lie on the Extracellular side of the membrane. Residues 587 to 609 (LIGTALFGYAAMMTIGATLSYLV) traverse the membrane as a helical segment. Topologically, residues 610–624 (DSLPGKGATGVALNN) are cytoplasmic. Residues 625 to 642 (LIRQILAATAVFVTTPML) traverse the membrane as a helical segment. At 643–648 (NGMGTG) the chain is on the extracellular side. The chain crosses the membrane as a helical span at residues 649–668 (WAFTMLAFIVLGASSVLIIL). Over 669 to 689 (KKHGDYWRENYDLQKLYDKID) the chain is Cytoplasmic.

It belongs to the major facilitator superfamily. CAR1 family.

The protein localises to the cell membrane. In terms of biological role, multidrug resistance transporter involved in resistance and adaptation to quinidine and to the herbicide barban (4-chloro-2-butynyl [3-chlorophenyl] carbamate). The protein is Quinidine resistance protein 3 (QDR3) of Saccharomyces cerevisiae (strain ATCC 204508 / S288c) (Baker's yeast).